We begin with the raw amino-acid sequence, 197 residues long: C-type lectin domain family 3 member A (197 aa).

A signal peptide spans 1 to 24 (MAKNGLVIYILVITLLLDQTSCHA). Disulfide bonds link cysteine 68–cysteine 78, cysteine 95–cysteine 191, and cysteine 167–cysteine 183. Positions 74 to 192 (FHKKCYLAAE…CHSSKRYICE (119 aa)) constitute a C-type lectin domain.

It localises to the secreted. Functionally, promotes cell adhesion to laminin and fibronectin. The polypeptide is C-type lectin domain family 3 member A (CLEC3A) (Bos taurus (Bovine)).